The chain runs to 2210 residues: Genome polyprotein (2210 aa).

The segment at 1–24 (MAPVVSRDQCKPKTPKPHRPAPPH) is disordered. Residues 13-22 (KTPKPHRPAP) show a composition bias toward basic residues. In terms of domain architecture, SF3 helicase spans 426–585 (SNKIVELSTM…ADFLRQHPGV (160 aa)). Residue 456–463 (GPPGHGKS) participates in ATP binding. Tyr940 carries the post-translational modification O-(5'-phospho-RNA)-tyrosine. A Peptidase C24 domain is found at 991–1136 (GNNCDDIPLH…KVITPITPEP (146 aa)). Catalysis depends on for 3CLpro activity residues His1025, Asp1039, and Cys1103. In terms of domain architecture, RdRp catalytic spans 1379-1501 (DHCLELDYSK…TIPSHLTKSI (123 aa)). Residues 1656–1685 (LIREGNMSDNKSIPEQQHESSRAMDAGATG) form a disordered region.

Specific enzymatic cleavages by its own cysteine protease yield mature proteins. The protease cleaves itself from the nascent polyprotein autocatalytically. Precursor p41 can be cleaved by viral 3CLpro into protein p19 and VPg, or cleaved by host protease into protein p23/2 and protein p18. Post-translationally, VPg is uridylylated by the polymerase and is covalently attached to the 5'-end of the polyadenylated genomic and subgenomic RNAs. This uridylylated form acts as a nucleotide-peptide primer for the polymerase.

Its subcellular location is the virion. The protein localises to the host cytoplasm. The enzyme catalyses a ribonucleoside 5'-triphosphate + H2O = a ribonucleoside 5'-diphosphate + phosphate + H(+). It catalyses the reaction Endopeptidase with a preference for cleavage when the P1 position is occupied by Glu-|-Xaa and the P1' position is occupied by Gly-|-Yaa.. It carries out the reaction RNA(n) + a ribonucleoside 5'-triphosphate = RNA(n+1) + diphosphate. Displays NTPase activity, but no helicase activity. Induces the formation of convoluted membranes derived from the host ER. These remodeled membranes probably form the viral factories that contain the replication complex. Together with NS2 and NS4, initiates the formation of the replication complex. Functionally, viral genome-linked protein is covalently linked to the 5'-end of the positive-strand, negative-strand genomic RNAs and subgenomic RNA. Acts as a genome-linked replication primer. May recruit ribosome to viral RNA thereby promoting viral proteins translation. Interacts with host translation initiation complex to allow the translation of viral proteins. In terms of biological role, processes the polyprotein. 3CLpro-RdRp is first released by autocleavage, then all other proteins are cleaved. May cleave polyadenylate-binding protein thereby inhibiting cellular translation. Its function is as follows. Replicates genomic and antigenomic RNA by recognizing replications specific signals. Also transcribes a subgenomic mRNA by initiating RNA synthesis internally on antigenomic RNA. This sgRNA codes for structural proteins. Catalyzes the covalent attachment VPg with viral RNAs. Capsid protein self assembles to form an icosahedral capsid with a T=3 symmetry, about 35 nm in diameter, and consisting of 180 capsid proteins. A smaller form of capsid with a diameter of 23 nm might be capsid proteins assembled as icosahedron with T=1 symmetry. The capsid encapsulate VP2 proteins and genomic or subgenomic RNA. Attaches virion to target cells by binding histo-blood group antigens, inducing endocytosis of the viral particle. Acidification of the endosome induces conformational change of capsid protein thereby injecting virus genomic RNA into host cytoplasm. The protein is Genome polyprotein of Bovine enteric calicivirus NB (isolate Bovine/United States/N ebraska/1980) (BEC-NB).